Here is an 883-residue protein sequence, read N- to C-terminus: Brevican core protein (883 aa).

Residues 1–22 form the signal peptide; it reads MIPLLLSLLAALVLTQAPAALA. Residues 35–154 form the Ig-like V-type domain; it reads FRVRIGAAQL…SSDAVEVKVK (120 aa). Disulfide bonds link Cys-56–Cys-136, Cys-178–Cys-249, Cys-202–Cys-223, Cys-276–Cys-351, and Cys-300–Cys-321. A glycan (N-linked (GlcNAc...) asparagine) is linked at Asn-129. Link domains are found at residues 156 to 251 and 256 to 353; these read VVFL…YCYA and GELF…YCFR. The N-linked (GlcNAc...) asparagine glycan is linked to Asn-336. The disordered stretch occupies residues 389–574; sequence QEAVESESRG…EDGPSLLPET (186 aa). Phosphoserine is present on Ser-413. A glycan (O-linked (Xyl...) (chondroitin sulfate) serine) is linked at Ser-413. The span at 428–440 shows a compositional bias: polar residues; that stretch reads ESETQSVAPPTGS. The segment covering 441-451 has biased composition (acidic residues); sequence SEEEGEALEEE. The span at 452 to 467 shows a compositional bias: basic and acidic residues; that stretch reads ERFKDTETPKEEKEQE. Ser-622 is lipidated: GPI-anchor amidated serine. The EGF-like domain maps to 622 to 658; it reads SSGDCIPSPCHNGGTCLEEKEGFRCLCVPGYGGDLCD. 7 disulfide bridges follow: Cys-626/Cys-637, Cys-631/Cys-646, Cys-648/Cys-657, Cys-692/Cys-784, Cys-760/Cys-776, Cys-791/Cys-834, and Cys-820/Cys-847. Positions 658–786 constitute a C-type lectin domain; the sequence is DVGLHFCSPG…NYHLSYTCKM (129 aa). One can recognise a Sushi domain in the interval 789-849; sequence VSCGPPPQLP…WEAPQISCVP (61 aa). Positions 859 to 883 are disordered; that stretch reads MTAPEGPRGQLPRQRKALLTPPSSL.

It belongs to the aggrecan/versican proteoglycan family. In terms of assembly, interacts with TNR. O-glycosylated; contains chondroitin sulfate. In terms of tissue distribution, brain.

Its subcellular location is the secreted. The protein localises to the extracellular space. It localises to the extracellular matrix. The protein resides in the membrane. May play a role in the terminally differentiating and the adult nervous system during postnatal development. Could stabilize interactions between hyaluronan (HA) and brain proteoglycans. Isoform 2 may function as a chondroitin sulfate-bearing cell surface receptor. This chain is Brevican core protein (Bcan), found in Rattus norvegicus (Rat).